Reading from the N-terminus, the 500-residue chain is Probable cytosol aminopeptidase (500 aa).

Positions 264 and 269 each coordinate Mn(2+). Lys-276 is an active-site residue. Residues Asp-287, Asp-346, and Glu-348 each coordinate Mn(2+). The active site involves Arg-350.

Belongs to the peptidase M17 family. Mn(2+) serves as cofactor.

The protein resides in the cytoplasm. The catalysed reaction is Release of an N-terminal amino acid, Xaa-|-Yaa-, in which Xaa is preferably Leu, but may be other amino acids including Pro although not Arg or Lys, and Yaa may be Pro. Amino acid amides and methyl esters are also readily hydrolyzed, but rates on arylamides are exceedingly low.. The enzyme catalyses Release of an N-terminal amino acid, preferentially leucine, but not glutamic or aspartic acids.. Functionally, presumably involved in the processing and regular turnover of intracellular proteins. Catalyzes the removal of unsubstituted N-terminal amino acids from various peptides. The protein is Probable cytosol aminopeptidase of Rickettsia canadensis (strain McKiel).